Reading from the N-terminus, the 432-residue chain is Enolase (432 aa).

Position 164 (Q164) interacts with (2R)-2-phosphoglycerate. The active-site Proton donor is the E206. Mg(2+)-binding residues include D243, E289, and D316. (2R)-2-phosphoglycerate-binding residues include K341, R370, S371, and K392. K341 serves as the catalytic Proton acceptor.

It belongs to the enolase family. The cofactor is Mg(2+).

It localises to the cytoplasm. The protein resides in the secreted. It is found in the cell surface. The enzyme catalyses (2R)-2-phosphoglycerate = phosphoenolpyruvate + H2O. Its pathway is carbohydrate degradation; glycolysis; pyruvate from D-glyceraldehyde 3-phosphate: step 4/5. Functionally, catalyzes the reversible conversion of 2-phosphoglycerate (2-PG) into phosphoenolpyruvate (PEP). It is essential for the degradation of carbohydrates via glycolysis. This is Enolase from Borrelia duttonii (strain Ly).